Consider the following 406-residue polypeptide: Acetate kinase (406 aa).

N7 serves as a coordination point for Mg(2+). K14 is an ATP binding site. R90 is a substrate binding site. D147 serves as the catalytic Proton donor/acceptor. Residues 207–211 (HLGNG), 283–285 (DMR), and 331–335 (GVGEN) contribute to the ATP site. E385 contributes to the Mg(2+) binding site.

The protein belongs to the acetokinase family. Homodimer. Requires Mg(2+) as cofactor. It depends on Mn(2+) as a cofactor.

The protein localises to the cytoplasm. The catalysed reaction is acetate + ATP = acetyl phosphate + ADP. The protein operates within metabolic intermediate biosynthesis; acetyl-CoA biosynthesis; acetyl-CoA from acetate: step 1/2. Catalyzes the formation of acetyl phosphate from acetate and ATP. Can also catalyze the reverse reaction. In Thermosipho africanus (strain TCF52B), this protein is Acetate kinase.